Consider the following 501-residue polypeptide: Flagellin (501 aa).

Belongs to the bacterial flagellin family.

It is found in the secreted. It localises to the bacterial flagellum. Functionally, flagellin is the subunit protein which polymerizes to form the filaments of bacterial flagella. This chain is Flagellin (fliC), found in Salmonella choleraesuis (strain SC-B67).